The primary structure comprises 315 residues: Lipoyl synthase (315 aa).

[4Fe-4S] cluster-binding residues include cysteine 63, cysteine 68, cysteine 74, cysteine 89, cysteine 93, cysteine 96, and serine 303. Residues phenylalanine 75–arginine 292 enclose the Radical SAM core domain.

It belongs to the radical SAM superfamily. Lipoyl synthase family. Requires [4Fe-4S] cluster as cofactor.

The protein localises to the cytoplasm. The catalysed reaction is [[Fe-S] cluster scaffold protein carrying a second [4Fe-4S](2+) cluster] + N(6)-octanoyl-L-lysyl-[protein] + 2 oxidized [2Fe-2S]-[ferredoxin] + 2 S-adenosyl-L-methionine + 4 H(+) = [[Fe-S] cluster scaffold protein] + N(6)-[(R)-dihydrolipoyl]-L-lysyl-[protein] + 4 Fe(3+) + 2 hydrogen sulfide + 2 5'-deoxyadenosine + 2 L-methionine + 2 reduced [2Fe-2S]-[ferredoxin]. The protein operates within protein modification; protein lipoylation via endogenous pathway; protein N(6)-(lipoyl)lysine from octanoyl-[acyl-carrier-protein]: step 2/2. Functionally, catalyzes the radical-mediated insertion of two sulfur atoms into the C-6 and C-8 positions of the octanoyl moiety bound to the lipoyl domains of lipoate-dependent enzymes, thereby converting the octanoylated domains into lipoylated derivatives. The chain is Lipoyl synthase from Laribacter hongkongensis (strain HLHK9).